Here is a 101-residue protein sequence, read N- to C-terminus: Small ribosomal subunit protein uS10 (101 aa).

This sequence belongs to the universal ribosomal protein uS10 family. Part of the 30S ribosomal subunit.

Involved in the binding of tRNA to the ribosomes. The sequence is that of Small ribosomal subunit protein uS10 from Saccharopolyspora erythraea (strain ATCC 11635 / DSM 40517 / JCM 4748 / NBRC 13426 / NCIMB 8594 / NRRL 2338).